The chain runs to 638 residues: Polypeptide N-acetylgalactosaminyltransferase 15 (638 aa).

Over 1–12 the chain is Cytoplasmic; sequence MLPRKRPRSGRS. The helical; Signal-anchor for type II membrane protein transmembrane segment at 13 to 35 threads the bilayer; that stretch reads RLQFLLLFLTLGCVLMMVILLHP. At 36 to 638 the chain is on the lumenal side; the sequence is PPPTLHQAVT…FDQIHPVDER (603 aa). A disordered region spans residues 134 to 157; that stretch reads KDWRTEEDGEESEEVLTPLGPDSD. Disulfide bonds link cysteine 181-cysteine 411, cysteine 402-cysteine 481, cysteine 516-cysteine 535, cysteine 561-cysteine 574, and cysteine 602-cysteine 619. The tract at residues 190–299 is catalytic subdomain A; that stretch reads LPTASVILCF…PGWLEPLLSR (110 aa). Substrate is bound by residues aspartate 231 and arginine 260. Mn(2+) is bound by residues aspartate 283, histidine 285, and histidine 416. Residues 357–419 are catalytic subdomain B; the sequence is PVRSPVVPRE…PCSRVGHIYR (63 aa). Arginine 419 serves as a coordination point for substrate. A Ricin B-type lectin domain is found at 503–630; the sequence is RFSGKLHNTG…GKTSQLWRFD (128 aa). N-linked (GlcNAc...) asparagine glycosylation is present at asparagine 573.

Belongs to the glycosyltransferase 2 family. GalNAc-T subfamily. It depends on Mn(2+) as a cofactor. As to expression, specifically expressed in testis.

It is found in the golgi apparatus membrane. It catalyses the reaction L-seryl-[protein] + UDP-N-acetyl-alpha-D-galactosamine = a 3-O-[N-acetyl-alpha-D-galactosaminyl]-L-seryl-[protein] + UDP + H(+). The catalysed reaction is L-threonyl-[protein] + UDP-N-acetyl-alpha-D-galactosamine = a 3-O-[N-acetyl-alpha-D-galactosaminyl]-L-threonyl-[protein] + UDP + H(+). It participates in protein modification; protein glycosylation. In terms of biological role, catalyzes the initial reaction in O-linked oligosaccharide biosynthesis, the transfer of an N-acetyl-D-galactosamine residue to a serine or threonine residue on the protein receptor. Although it displays a much weaker activity toward all substrates tested compared to GALNT2, it is able to transfer up to seven GalNAc residues to the Muc5AC peptide, suggesting that it can fill vicinal Thr/Ser residues in cooperation with other GALNT proteins. Prefers Muc1a as substrate. In Mus musculus (Mouse), this protein is Polypeptide N-acetylgalactosaminyltransferase 15 (Galnt15).